The following is a 177-amino-acid chain: MVEKAQLMDEKAIARAITRISHEIIERNKGVENLVLVGIKTRGVPIANRISKKIEQIEGTKVDTGDIDITLYRDDLEKIHVEPVVKGTYLDFNVNDKTVVLVDDVLYTGRTVRASLDAIIDIGRPKSIQLAVLVDRGHRELPIRADYVGKNVPTSRHEIISVSLLEIDGEDSVTIKE.

The PRPP-binding motif lies at 99-111 (VVLVDDVLYTGRT).

It belongs to the purine/pyrimidine phosphoribosyltransferase family. PyrR subfamily. Homodimer and homohexamer; in equilibrium.

The enzyme catalyses UMP + diphosphate = 5-phospho-alpha-D-ribose 1-diphosphate + uracil. Its function is as follows. Regulates transcriptional attenuation of the pyrimidine nucleotide (pyr) operon by binding in a uridine-dependent manner to specific sites on pyr mRNA. This disrupts an antiterminator hairpin in the RNA and favors formation of a downstream transcription terminator, leading to a reduced expression of downstream genes. In terms of biological role, also displays a weak uracil phosphoribosyltransferase activity which is not physiologically significant. The polypeptide is Bifunctional protein PyrR (Clostridioides difficile (strain 630) (Peptoclostridium difficile)).